The chain runs to 55 residues: Sec-independent protein translocase protein TatA (55 aa).

The chain crosses the membrane as a helical span at residues 1–21 (MSLGPWQLFLVLIIILVLFGA).

It belongs to the TatA/E family. The Tat system comprises two distinct complexes: a TatABC complex, containing multiple copies of TatA, TatB and TatC subunits, and a separate TatA complex, containing only TatA subunits. Substrates initially bind to the TatABC complex, which probably triggers association of the separate TatA complex to form the active translocon.

It localises to the cell membrane. In terms of biological role, part of the twin-arginine translocation (Tat) system that transports large folded proteins containing a characteristic twin-arginine motif in their signal peptide across membranes. TatA could form the protein-conducting channel of the Tat system. This Wolbachia pipientis wMel protein is Sec-independent protein translocase protein TatA.